A 460-amino-acid polypeptide reads, in one-letter code: WD repeat-containing protein 41 (460 aa).

6 WD repeats span residues 40 to 79 (EAHRDIVRFLVRLDDFRFASAGDDGIIVVWNAQTGEKLLE), 82 to 128 (GHTQ…QIQR), 131 to 168 (CFQSTVKCLTVLQRLDIWLSGGSDLGVWNRKLDLLCKT), 220 to 258 (DHQDNILSLANINDTGFVTGSHVGELLIWDALDWTVQAC), 321 to 359 (AHDSNILHIDKLPNRQLISCSEDGAVRMWEVREKQQLAA), and 403 to 441 (GHSSSVEMFLYFEDHGLVTCSADHLIILWKNGERESGVR).

Component of the C9orf72-SMCR8 complex, at least composed of C9orf72, SMCR8 and WDR41. The complex is formed of two protomers, each individually consisting of one molecule each of C9orf72, SMCR8 and WDR41. The protomers homodimerize via an interaction between C9orf72 (via C-terminus) and SMCR8 (via N-terminus). Within each protomer SMCR8 (via DENN domain) acts as a bridging protein between WDR41 (via C-terminus and N-terminus) and C9orf72 (via C-terminus). The C9orf72-SMCR8 complex associates with the ULK1/ATG1 kinase complex.

It localises to the cytoplasm. Functionally, non-catalytic component of the C9orf72-SMCR8 complex, a complex that has guanine nucleotide exchange factor (GEF) activity and regulates autophagy. The C9orf72-SMCR8 complex promotes the exchange of GDP to GTP, converting inactive GDP-bound RAB8A and RAB39B into their active GTP-bound form, thereby promoting autophagosome maturation. As part of the C9orf72-SMCR8 complex, stimulates RAB8A and RAB11A GTPase activity in vitro, however WDR42 is shown not be an essential complex component for this function. The C9orf72-SMCR8 complex also acts as a negative regulator of autophagy initiation by interacting with the ULK1/ATG1 kinase complex and inhibiting its protein kinase activity. In Mus musculus (Mouse), this protein is WD repeat-containing protein 41.